The following is a 138-amino-acid chain: MSMKYLMLLFAAMIIRSFADSGNAIETTLPEITNATTDIPAIRLCGPEGDGYCLHGDCIHARDIDGMYCRCSHGYTGIRCQHVVLVDYQRSEKPNTTTSYIPSPGIVLVLVGIIMCCLLSVYRFTRRTKLPIQDMVVP.

An N-terminal signal peptide occupies residues 1 to 19; that stretch reads MSMKYLMLLFAAMIIRSFA. Residue Asn34 is glycosylated (N-linked (GlcNAc...) asparagine; by host). The EGF-like domain maps to 41 to 81; it reads AIRLCGPEGDGYCLHGDCIHARDIDGMYCRCSHGYTGIRCQ. Cystine bridges form between Cys45-Cys58, Cys53-Cys69, and Cys71-Cys80. The N-linked (GlcNAc...) asparagine; by host glycan is linked to Asn95.

It belongs to the orthopoxvirus OPG019 family.

The protein localises to the secreted. Its function is as follows. Stimulates cellular proliferation (hyperplasia)and mobility around infected cells to promote rapid and efficient spread of infection. The chain is Growth factor (OPG019) from Rabbitpox virus (strain Utrecht) (RPV).